Reading from the N-terminus, the 1416-residue chain is MDFYSTSFTIPRSIGASSFVTETTNPNGSITAASSSSFSLEAPRPGSHVGARTAPTASAAPEPPASSLPGRFTSMRSRFPPSVKAFMPSAFGGKRTSDRIVEAVGAEKAEADAATGSSSQPVKAEPEQSAPLAPIGERGNARPSKLVNPSLANMDDNGSSQHRDSRSTVGTRSSFDISSAASFTADSTAASSAIGVNSSSTTHSASNSISANHVQQDRGISLSQSSKDLQEAIQKLSSDIMANHQCLVSFASVPQNDESRMPPTPLSHPFARQSSFSSLQSLDQLPFPNPNGSSGYPYQQYHPQPIGTPDSHSSAFFPGRAAGEALGSGFPGLNSSSLSLSSLNPPASGSHVAQEVGLSSAQPLRSPQPNAIGASRASLSSMPKPPQYNFHLSGGYQQVMNARGTILRENPFKSTSSIKVPRADVFDVAPASSPPAKESIKEDVRRKLDEVQTATGATITLKNSEVRGADLGYGLETERIVEVLVSGTFESVELARVKVLVILDEIAGLRSETCEIDYKLHNIIGGRKRCVVQKIEEETGTSIYLPSSFLGTFGSSLASRNDGKAVAAHQNQIHITGEFFGVQRARDMLFQVSMHKSKGIISRDAAILPRKLDWMLTDRLEELRSIMIDNGTFVAFPLLGSQTSVISVFGDHRVNIERTIRSIMQLACQFYVASLWLLPVGFDVYMPSPQANLNPTQVAPMLKHVANASGAEVVFKSNCFEIHGLESEVRTAVSALLELELIKSFNFEVRFQIELANEHREFISGKKNGKVNKVMKQCGVRIKFETFNDYNFLIDVSGNDRNGVLQGLGLLQEELPAEMSFHVPEAYHKRIIGVGGKNIQRIMKKFGVYVKFSNAEEFAALGGYLDNEDNVIARTPAKNAANLENLKLSVMELVNPKDKDYISETVTISRRYHRTLLGEKAIFIHDIESKTSSSVRFPARESASDLVTIFGPESQIHIAAQMLLDHVPFEAEFRAPNSTELGDAIHSAEFAALAEQLKRDLSISVSPVIEQRRPGGEAVFKLRLNRSNTDFLPTAKDAIEDFLINRNANIYAAPSRTRSDSFASAFPHFANKLISTAGAAESNESFNTAAAAAAAAAEQARVNERRLRAAASTPDIKALFDAPSQHLHGGPGFASSNGGSAATAANSPLITSPLYTSPYGNGRGFGSDVWGAPTRAFTASNASNATPSLMGLPPPSVGTPGAGLVSAAGPGPIGAGVSVPTSGGIQFPSQPSLHQQSGHRLSDEMHMNRGLEGMSMEDRVKALRKPRSFAHRAQSLDIGAMAAQQASQHASGSMSVGPSTPYGLGPIGTGAPGMSGHFPGMTSSQGTFGGGAPHHLYQPPTPQQQAQQQLQYQQQQQQQQQQQQQPGYGMPHQPQHFHASSASISRLPPGRNTQNPDSTTMDEVSRVLAQLAFDRA.

Disordered stretches follow at residues 25–76 (NPNG…TSMR), 108–174 (KAEA…TRSS), 196–225 (VNSS…LSQS), 255–320 (QNDE…FPGR), and 341–385 (SSLN…MPKP). Low complexity-rich tracts occupy residues 196–213 (VNSS…SANH), 273–285 (QSSF…LDQL), and 341–350 (SSLNPPASGS). Positions 357 to 369 (GLSSAQPLRSPQP) are enriched in polar residues. 5 consecutive KH domains span residues 412-504 (FKST…VILD), 508-594 (GLRS…QVSM), 747-816 (FEVR…EELP), 817-892 (AEMS…SVME), and 900-968 (DYIS…DHVP). Disordered stretches follow at residues 1215–1240 (AGVS…SGHR) and 1289–1416 (HASG…FDRA). Residues 1219–1239 (VPTSGGIQFPSQPSLHQQSGH) show a composition bias toward polar residues. Over residues 1343–1374 (QQQAQQQLQYQQQQQQQQQQQQQPGYGMPHQP) the composition is skewed to low complexity. The segment covering 1391 to 1402 (RNTQNPDSTTMD) has biased composition (polar residues).

RNA-binding protein that recognizes the sequence AUACCC via its tandem KH domains 3 and 4, probably in order to promote mRNA instability. Plays an essential role in filamentous growth and virulence. The protein is K homology domain-containing protein 4 of Mycosarcoma maydis (Corn smut fungus).